A 466-amino-acid polypeptide reads, in one-letter code: Prophage integrase IntF (466 aa).

In terms of domain architecture, Core-binding (CB) spans 134–239 (KTKVTFSVAW…LLRAFIKWSN (106 aa)). A Tyr recombinase domain is found at 268–445 (KADDCLQKEQ…PLDLLRKWHE (178 aa)). Catalysis depends on residues Arg306, Lys328, His396, Arg399, and His422. Catalysis depends on Tyr432, which acts as the O-(3'-phospho-DNA)-tyrosine intermediate.

Belongs to the 'phage' integrase family.

Integrase is necessary for integration of the phage into the host genome by site-specific recombination. In conjunction with excisionase, integrase is also necessary for excision of the prophage from the host genome. The polypeptide is Prophage integrase IntF (intF) (Escherichia coli (strain K12)).